A 512-amino-acid polypeptide reads, in one-letter code: GMP synthase [glutamine-hydrolyzing] (512 aa).

The Glutamine amidotransferase type-1 domain maps to 7-197 (TIIVLDFGSQ…VFGVCGCSEG (191 aa)). Cys84 functions as the Nucleophile in the catalytic mechanism. Residues His171 and Glu173 contribute to the active site. The GMPS ATP-PPase domain maps to 198–387 (WNMENFIEVE…LGIPDEIVWR (190 aa)). Residue 225 to 231 (SGGVDSS) participates in ATP binding.

In terms of assembly, homodimer.

The enzyme catalyses XMP + L-glutamine + ATP + H2O = GMP + L-glutamate + AMP + diphosphate + 2 H(+). Its pathway is purine metabolism; GMP biosynthesis; GMP from XMP (L-Gln route): step 1/1. Functionally, catalyzes the synthesis of GMP from XMP. In Bacillus cereus (strain B4264), this protein is GMP synthase [glutamine-hydrolyzing].